Here is a 1082-residue protein sequence, read N- to C-terminus: Mediator of RNA polymerase II transcription subunit 14 (1082 aa).

2 disordered regions span residues Met1–Pro80 and Glu319–Leu343. N-acetylthreonine is present on Thr2. A Phosphoserine modification is found at Ser7. Residues Asn13 to Ser28 show a composition bias toward basic and acidic residues. Positions Glu29–Lys59 are enriched in polar residues. A compositionally biased stretch (low complexity) spans Thr321 to Asn340. Phosphothreonine is present on Thr1036.

It belongs to the Mediator complex subunit 14 family. In terms of assembly, component of the Mediator complex, which is composed of at least 21 subunits that form three structurally distinct submodules. The Mediator head module contains MED6, MED8, MED11, SRB4/MED17, SRB5/MED18, ROX3/MED19, SRB2/MED20 and SRB6/MED22, the middle module contains MED1, MED4, NUT1/MED5, MED7, CSE2/MED9, NUT2/MED10, SRB7/MED21 and SOH1/MED31, and the tail module contains MED2, PGD1/MED3, RGR1/MED14, GAL11/MED15 and SIN4/MED16. The head and the middle modules interact directly with RNA polymerase II, whereas the elongated tail module interacts with gene-specific regulatory proteins.

Its subcellular location is the nucleus. Its function is as follows. Component of the Mediator complex, a coactivator involved in the regulated transcription of nearly all RNA polymerase II-dependent genes. Mediator functions as a bridge to convey information from gene-specific regulatory proteins to the basal RNA polymerase II transcription machinery. The Mediator complex, having a compact conformation in its free form, is recruited to promoters by direct interactions with regulatory proteins and serves for the assembly of a functional preinitiation complex with RNA polymerase II and the general transcription factors. The Mediator complex unfolds to an extended conformation and partially surrounds RNA polymerase II, specifically interacting with the unphosphorylated form of the C-terminal domain (CTD) of RNA polymerase II. The Mediator complex dissociates from the RNA polymerase II holoenzyme and stays at the promoter when transcriptional elongation begins. The protein is Mediator of RNA polymerase II transcription subunit 14 (RGR1) of Saccharomyces cerevisiae (strain ATCC 204508 / S288c) (Baker's yeast).